The chain runs to 362 residues: tRNA-specific 2-thiouridylase MnmA (362 aa).

Residues 6 to 13 and Leu-32 contribute to the ATP site; that span reads AMSGGVDS. Catalysis depends on Cys-101, which acts as the Nucleophile. Cysteines 101 and 197 form a disulfide. ATP is bound at residue Gly-125. The interaction with tRNA stretch occupies residues 147-149; that stretch reads KDQ. The active-site Cysteine persulfide intermediate is Cys-197.

Belongs to the MnmA/TRMU family.

The protein localises to the cytoplasm. It catalyses the reaction S-sulfanyl-L-cysteinyl-[protein] + uridine(34) in tRNA + AH2 + ATP = 2-thiouridine(34) in tRNA + L-cysteinyl-[protein] + A + AMP + diphosphate + H(+). Catalyzes the 2-thiolation of uridine at the wobble position (U34) of tRNA, leading to the formation of s(2)U34. This Acidothermus cellulolyticus (strain ATCC 43068 / DSM 8971 / 11B) protein is tRNA-specific 2-thiouridylase MnmA.